Here is a 146-residue protein sequence, read N- to C-terminus: ATP synthase epsilon chain (146 aa).

Positions 102–122 (QSAKKRAEQHMQEAKEKHNER) are disordered.

It belongs to the ATPase epsilon chain family. As to quaternary structure, F-type ATPases have 2 components, CF(1) - the catalytic core - and CF(0) - the membrane proton channel. CF(1) has five subunits: alpha(3), beta(3), gamma(1), delta(1), epsilon(1). CF(0) has three main subunits: a, b and c.

Its subcellular location is the cell membrane. Functionally, produces ATP from ADP in the presence of a proton gradient across the membrane. The sequence is that of ATP synthase epsilon chain from Lactobacillus gasseri (strain ATCC 33323 / DSM 20243 / BCRC 14619 / CIP 102991 / JCM 1131 / KCTC 3163 / NCIMB 11718 / NCTC 13722 / AM63).